We begin with the raw amino-acid sequence, 452 residues long: ADP-dependent glucose/glucosamine kinase (452 aa).

The ADPK domain occupies M1–S452. D-glucose is bound by residues D33, E87, G111–Q112, and H174. E264 contacts Mg(2+). N290 contributes to the ADP binding site. E293 provides a ligand contact to Mg(2+). ADP-binding positions include H339–T340, V426, and G436. D437 is a binding site for D-glucose. D437 provides a ligand contact to Mg(2+). D437 acts as the Proton acceptor in catalysis.

Belongs to the ADP-dependent glucokinase family. The cofactor is Mg(2+).

Its subcellular location is the cytoplasm. It catalyses the reaction D-glucose + ADP = D-glucose 6-phosphate + AMP + H(+). The enzyme catalyses D-glucosamine + ADP = D-glucosamine 6-phosphate + AMP + H(+). The protein operates within carbohydrate degradation; glycolysis. Functionally, catalyzes the ADP-dependent phosphorylation of D-glucose to D-glucose 6-phosphate and glucosamine to glucosamine 6-phosphate. The sequence is that of ADP-dependent glucose/glucosamine kinase from Pyrococcus abyssi (strain GE5 / Orsay).